The primary structure comprises 1396 residues: Sterol 3-beta-glucosyltransferase (1396 aa).

A compositionally biased stretch (basic and acidic residues) spans 1 to 16; the sequence is MRPFIDDAKRRAERRL. 4 disordered regions span residues 1–21, 40–64, 83–196, and 209–232; these read MRPFIDDAKRRAERRLSASRQ, DADDAQMDYTAPPSSNDSRDGMQYM, ARFD…RAAP, and ETENPEENPQTLEEKEQGVSKKSQ. Basic and acidic residues predominate over residues 94 to 107; the sequence is ETRTRPRFLSEKPF. Low complexity predominate over residues 186–196; sequence RPRSATPRAAP. The region spanning 238 to 273 is the GRAM 1 domain; sequence RQLMEMFRFPTPEKVVVEYACSLLQSMLLQGYMYVT. Residues 289 to 388 enclose the PH domain; it reads RVIKSGYIYK…WVRALQKVIF (100 aa). Disordered regions lie at residues 460–532 and 571–627; these read GTPT…SSSS and TIHT…ESKD. 2 stretches are compositionally biased toward polar residues: residues 484-532 and 571-584; these read GSQN…SSSS and TIHTWQQRTSGTAR. A compositionally biased stretch (basic and acidic residues) spans 588-602; sequence RHSDEITRSTTEHGL. Positions 717-783 constitute a GRAM 2 domain; the sequence is ERFRAHFALP…HDIENVEKEK (67 aa). UDP-alpha-D-glucose is bound by residues Ser905, Arg906, Asp908, Ala1208, His1210, His1223, Gly1227, Thr1228, Asp1247, and Gln1248. Positions 1324–1343 are enriched in low complexity; that stretch reads SSISSTPFSPTPSTKTSDDQ. Positions 1324–1346 are disordered; that stretch reads SSISSTPFSPTPSTKTSDDQNAN.

Belongs to the glycosyltransferase 28 family.

It is found in the cytoplasm. Its subcellular location is the preautophagosomal structure membrane. The catalysed reaction is a sterol + UDP-alpha-D-glucose = a sterol 3-beta-D-glucoside + UDP + H(+). It catalyses the reaction ergosterol + UDP-alpha-D-glucose = ergosteryl 3-beta-D-glucoside + UDP + H(+). In terms of biological role, sterol glycosyltransferase responsible for the glycosylation of ergosterol to form ergosterol-glucoside. The protein is Sterol 3-beta-glucosyltransferase of Emericella nidulans (strain FGSC A4 / ATCC 38163 / CBS 112.46 / NRRL 194 / M139) (Aspergillus nidulans).